The sequence spans 227 residues: MQSFETLEKLLGYSFKNQELLIEALSHPSLRQHHEYKYDKDYERLEFLGDAVLNLVVTEILFRNFASYNEGNLAKIRSYLVCKETICVVGTKLTLKDYIIMTYGEEVAGGRDNPNNIENAMEALIAAIYLDSNIETTRNIIGKLWEEFIKIQNLTDYDPKTALQEWAQASSHHLPIYRLIKREGAAHSSTFTVLVKVKDYEQTGTGHSIKEAEKNAARDLLHRLQDV.

The region spanning 4-133 (FETLEKLLGY…LIAAIYLDSN (130 aa)) is the RNase III domain. Glutamate 46 is a binding site for Mg(2+). Aspartate 50 is a catalytic residue. Residues asparagine 119 and glutamate 122 each coordinate Mg(2+). Residue glutamate 122 is part of the active site. The 69-residue stretch at 158-226 (DPKTALQEWA…ARDLLHRLQD (69 aa)) folds into the DRBM domain.

This sequence belongs to the ribonuclease III family. In terms of assembly, homodimer. It depends on Mg(2+) as a cofactor.

It localises to the cytoplasm. The enzyme catalyses Endonucleolytic cleavage to 5'-phosphomonoester.. Digests double-stranded RNA. Involved in the processing of primary rRNA transcript to yield the immediate precursors to the large and small rRNAs (23S and 16S). Processes some mRNAs, and tRNAs when they are encoded in the rRNA operon. Processes pre-crRNA and tracrRNA of type II CRISPR loci if present in the organism. This chain is Ribonuclease 3, found in Rickettsia akari (strain Hartford).